The following is a 420-amino-acid chain: MGQETEINKRYQVAKERYQAIGVDTEKALKTLKDIKISMHCWQGDDVKGFLNPDGELTGGIMATGNYPGAAHTPKQLRQDLEKAYSLIPGKHKLNLHAIYVDTDEKVDLNEIEPKHFTPWVEWAKEQGLGLDFNPTFFSHPMFKDNYTLASPDKEVRDFWIEHGKRSRKISEYFGKELGQTSINNFWVPDGIKDCPIDRYTPRKRLMEALDEVFAEKLDEKYTQEAVESKLFGLGAEAYTVGSHEFYMGYGITRDKLICLDAGHFHPTEVISNKLSSLALFSKGVMLHVSRPVRWDSDHVVIMDDELIEIGRELVRNDLLGITNIGLDFFDATINRIAAWVVGTRNTQKSLLKALLEPTADLKKMELENDFTSRMAITEELKDFPFGDVWNYFCEINGVPVGLDWLKEVKAYEEDVLLKR.

Residues His-264, Asp-296, and Asp-298 each coordinate Mn(2+).

It belongs to the rhamnose isomerase family. Mn(2+) serves as cofactor.

Its subcellular location is the cytoplasm. The catalysed reaction is L-rhamnopyranose = L-rhamnulose. It functions in the pathway carbohydrate degradation; L-rhamnose degradation; glycerone phosphate from L-rhamnose: step 1/3. Its function is as follows. Catalyzes the interconversion of L-rhamnose and L-rhamnulose. The polypeptide is L-rhamnose isomerase (Listeria monocytogenes serovar 1/2a (strain ATCC BAA-679 / EGD-e)).